Here is a 699-residue protein sequence, read N- to C-terminus: DnaJ homolog subfamily C member 14 (699 aa).

The disordered stretch occupies residues 1 to 230 (MAQKHPGEGG…RHRLGRKRSQ (230 aa)). A compositionally biased stretch (pro residues) spans 75–84 (HGPPRGPGPP). Positions 86-102 (AEEDPDQSEASSEESGV) are enriched in acidic residues. The segment covering 117–133 (DGNSSFLSIPSTCNCQG) has biased composition (polar residues). The span at 163–176 (GEDEELEGEYDEEE) shows a compositional bias: acidic residues. A compositionally biased stretch (basic and acidic residues) spans 203-218 (PAKEDTREGGRRDPRS). A compositionally biased stretch (basic residues) spans 219-228 (PGRHRLGRKR). 3 consecutive transmembrane segments (helical) span residues 251–271 (AGFW…ETCG), 301–321 (GWAQ…AGLF), and 327–347 (LVGA…QLGW). The 65-residue stretch at 444–508 (NPFHVLGVEA…ERRKEYEMKR (65 aa)) folds into the J domain. The disordered stretch occupies residues 655-699 (MSNGNFFAAPQPGPGATAASKPNSTVPKGEAKPKRRKKVRRPFQR). Residues 662 to 673 (AAPQPGPGATAA) show a composition bias toward low complexity. The segment covering 687-699 (PKRRKKVRRPFQR) has biased composition (basic residues).

In terms of assembly, interacts with the FxxxFxxxF motif of DRD1 via its C-terminal domain. Interacts with pestivirus nonstructural protein NS2.

It is found in the endoplasmic reticulum membrane. Its function is as follows. Regulates the export of target proteins, such as DRD1, from the endoplasmic reticulum to the cell surface. Promotes cleavage of pestivirus polyprotein. The sequence is that of DnaJ homolog subfamily C member 14 (DNAJC14) from Bos taurus (Bovine).